The sequence spans 953 residues: Protein translocase subunit SecA (953 aa).

Residues Gln84, 102 to 106, and Asp491 contribute to the ATP site; that span reads GEGKT. The tract at residues 832 to 953 is disordered; sequence EPEPAPEQPS…RAEAKKNKRR (122 aa). Over residues 841–865 the composition is skewed to low complexity; that stretch reads SVPVSVSRSAEPTPDLQAAAEAAAA. Basic and acidic residues predominate over residues 898 to 907; that stretch reads KGLDAPEKQR. The span at 908 to 934 shows a compositional bias: polar residues; it reads LNYSGPTEQGGVQTTSESAGEQGNGTS. Residues 940 to 953 show a composition bias toward basic and acidic residues; sequence RAAARAEAKKNKRR.

Belongs to the SecA family. As to quaternary structure, monomer and homodimer. Part of the essential Sec protein translocation apparatus which comprises SecA, SecYEG and auxiliary proteins SecDF. Other proteins may also be involved.

The protein resides in the cell membrane. It localises to the cytoplasm. The catalysed reaction is ATP + H2O + cellular proteinSide 1 = ADP + phosphate + cellular proteinSide 2.. Part of the Sec protein translocase complex. Interacts with the SecYEG preprotein conducting channel. Has a central role in coupling the hydrolysis of ATP to the transfer of proteins into and across the cell membrane, serving as an ATP-driven molecular motor driving the stepwise translocation of polypeptide chains across the membrane. This chain is Protein translocase subunit SecA, found in Saccharopolyspora erythraea (strain ATCC 11635 / DSM 40517 / JCM 4748 / NBRC 13426 / NCIMB 8594 / NRRL 2338).